We begin with the raw amino-acid sequence, 586 residues long: Arginine--tRNA ligase (586 aa).

A 'HIGH' region motif is present at residues 128-138; that stretch reads ANPTGPLHVGH.

Belongs to the class-I aminoacyl-tRNA synthetase family. As to quaternary structure, monomer.

It is found in the cytoplasm. It carries out the reaction tRNA(Arg) + L-arginine + ATP = L-arginyl-tRNA(Arg) + AMP + diphosphate. In Legionella pneumophila (strain Corby), this protein is Arginine--tRNA ligase.